Consider the following 945-residue polypeptide: MSNKKADSKPQARYPVNLLDTPFPMRGDLPRREPQWVKDWQERKIYEKIRAASKGRKKFILHDGPPYANGDIHLGHAVNKILKDMIVKARNLAGFDAVYVPGWDCHGMPIEIQIEKQFGKSLPAAEVMQKARAYATEQIEKQKAGFRRLGVLGDWDNPYKTMNFANEAGEIRALAKIMEKGYVFRGLKPVNWCFDCGSALAEAEVEYKDKTDPTIDVMFTFADPEKTAHAFGLAALPRNEGGIVIWTTTPWTIPANQALNLHPEIVYALVDTPRGLLILAEERVEACLKSYGIAGTVIATAPGAKLANLRFNHPLASAHPSYKRTSPVYLGDYVTTETGTGIVHSSPAYGVEDFISCKTHGMADSDILSPVMGDGRYIESLALFGGLSIWDANPKIVEALDEAGTLLRTEKYLHSYMHCWRHKTPIIYRATSQWFAGMDIKPNDSDKTLRETALEGIEATAFYPSWGKQRLFAMIANRPDWTLSRQRQWGVPMAFFVHKETGELHPRTLELLEEVAKRVEVSGIEAWQTLDPRELIGDDANMYEKNRDTLDVWFDSGTTHWHVLRGSHKDELQFPADLYLEGSDQHRGWFHSSLLTASMLDGRPPYNALLTHGFTVDGEGRKMSKSLGNGIDPHEVSNRLGAEIIRLWIASTDYSGELAISEEILKRVTESYRRIRNTLRFLLANLSDFDIGKHARPVGEWLEIDRYAVALTANLQADILSHYDRYEFHPVVAKLQTFCSEDLGGFYLDVLKDRLYTTAADSKARRSAQTALYHIAHGLLRLMAPFLSFTAEEAWKVFQPQSETIYTETYHAYPDVPEASTLLDKWTLLRAVRSDVTKALEEARVANQIGSSLQAEVEIRAAGARHDALASLGADLKFVLITSGATVVKVDSVDEEGVDVITSKYLKCERCWHYRKDVGESAEHPTLCGRCISNLFGNGETRSAA.

Positions 66–76 (PYANGDIHLGH) match the 'HIGH' region motif. L-isoleucyl-5'-AMP is bound at residue Glu-581. A 'KMSKS' region motif is present at residues 622–626 (KMSKS). ATP is bound at residue Lys-625. Zn(2+) is bound by residues Cys-908, Cys-911, Cys-928, and Cys-931.

This sequence belongs to the class-I aminoacyl-tRNA synthetase family. IleS type 1 subfamily. As to quaternary structure, monomer. Requires Zn(2+) as cofactor.

The protein resides in the cytoplasm. The catalysed reaction is tRNA(Ile) + L-isoleucine + ATP = L-isoleucyl-tRNA(Ile) + AMP + diphosphate. Its function is as follows. Catalyzes the attachment of isoleucine to tRNA(Ile). As IleRS can inadvertently accommodate and process structurally similar amino acids such as valine, to avoid such errors it has two additional distinct tRNA(Ile)-dependent editing activities. One activity is designated as 'pretransfer' editing and involves the hydrolysis of activated Val-AMP. The other activity is designated 'posttransfer' editing and involves deacylation of mischarged Val-tRNA(Ile). The polypeptide is Isoleucine--tRNA ligase (Paraburkholderia phymatum (strain DSM 17167 / CIP 108236 / LMG 21445 / STM815) (Burkholderia phymatum)).